The primary structure comprises 38 residues: KYYEPNTVQGRSVIVHLFEWRWKDVADECEQFLSPKGY.

Belongs to the glycosyl hydrolase 13 family. In terms of assembly, monomer. Requires Ca(2+) as cofactor. The cofactor is chloride. In terms of tissue distribution, expressed by the venom gland.

The protein resides in the secreted. It carries out the reaction Endohydrolysis of (1-&gt;4)-alpha-D-glucosidic linkages in polysaccharides containing three or more (1-&gt;4)-alpha-linked D-glucose units.. This chain is Alpha-amylase, found in Tityus serrulatus (Brazilian scorpion).